The sequence spans 535 residues: Reticuline oxidase (535 aa).

A signal peptide spans 1–23 (MMCRSLTLRFFLFIVLLQTCVRG). The N-linked (GlcNAc...) asparagine glycan is linked to N42. The FAD-binding PCMH-type domain occupies 71 to 245 (TVSKPSFIVM…YAWKIKLLPV (175 aa)). Residues 108-170 (HSYEGLSYTA…DTLGFTAGWC (63 aa)) constitute a cross-link (6-(S-cysteinyl)-8alpha-(pros-histidyl)-FAD (His-Cys)). N475 is a glycosylation site (N-linked (GlcNAc...) asparagine).

This sequence belongs to the oxygen-dependent FAD-linked oxidoreductase family. FAD serves as cofactor. The cofactor is a metal cation. The FAD cofactor is bound via a bicovalent 6-S-cysteinyl, 8alpha-N1-histidyl FAD linkage. Expressed in roots and stems. Not detected in leaves or reproductive organs. Restricted to the parietal region of sieve elements adjacent or proximal to laticifers.

It localises to the cytoplasmic vesicle. It catalyses the reaction (S)-reticuline + O2 = (S)-scoulerine + H2O2 + H(+). It functions in the pathway alkaloid biosynthesis; (S)-scoulerine biosynthesis; (S)-scoulerine from (S)-reticuline: step 1/1. In terms of biological role, oxygen-dependent FAD-dependent oxidoreductase essential to the formation of benzophenanthridine alkaloids in the response of plants to pathogenic attack. Catalyzes the stereospecific conversion of the N-methyl moiety of (S)-reticuline into the berberine bridge carbon of (S)-scoulerine. Involved in the biosynthesis of sanguinarine. This chain is Reticuline oxidase (BBE1), found in Papaver somniferum (Opium poppy).